A 415-amino-acid polypeptide reads, in one-letter code: Autophagy-related protein 19 (415 aa).

Residues 21–28 (YDECNKFQ) form an ATG11-binding region. Residues 126-135 (CREDAHEDPV) are compositionally biased toward basic and acidic residues. Residues 126–150 (CREDAHEDPVSPKAGSEEEISPNST) are disordered. 2 positions are modified to phosphoserine: serine 136 and serine 141. Positions 157-187 (RECLDNFMKQLLKLEESLNKLELEQKVTNKE) form a coiled coil. Residues lysine 213 and lysine 216 each participate in a glycyl lysine isopeptide (Lys-Gly) (interchain with G-Cter in ubiquitin) cross-link. A Phosphoserine modification is found at serine 243. The segment at 254–367 (VEPPNERSLQ…LRPPSRLSAE (114 aa)) is AMS1-binding. Residues 406-415 (NEKALTWEEL) form an ATG8-binding region. The WXXL motif lies at 412–415 (WEEL).

As to quaternary structure, interacts with the vacuolar aminopeptidase 1 (LAP4) precursor and mature forms. Also interacts with AMS1, APE4, ATG8 ATG11, and UBP3. In terms of processing, polyubiquitinated at Lys-213 and Lys-216. Deubiquitination by UBP3 is required for full activity of ATG19.

Its subcellular location is the preautophagosomal structure membrane. Cargo-receptor protein involved in the cytoplasm to vacuole transport (Cvt) and in autophagy. Recognizes cargo proteins, such as APE4, LAP3, LAP4 and AMS1 and delivers them to the pre-autophagosomal structure for eventual engulfment by the autophagosome and targeting to the vacuole. Involved in the organization of the preautophagosomal structure (PAS). ATG19 association with cargo protein is required to localize ATG11 to the PAS. Also involved in endoplasmic reticulum-specific autophagic process, in selective removal of ER-associated degradation (ERAD) substrates, and is essential for the survival of cells subjected to severe ER stress. Also plays a role in regulation of filamentous growth. This is Autophagy-related protein 19 (ATG19) from Saccharomyces cerevisiae (strain YJM789) (Baker's yeast).